A 352-amino-acid chain; its full sequence is Cell division protein ZipA (352 aa).

Residues 1 to 5 (MQELR) lie on the Periplasmic side of the membrane. Residues 6–26 (LVLIIVGALAISALLLHGLWT) form a helical membrane-spanning segment. The Cytoplasmic segment spans residues 27–352 (SRKEKPAKFG…REKAKLYSQA (326 aa)). Over residues 35 to 54 (FGEKPLGKLDDSNRDTEGFD) the composition is skewed to basic and acidic residues. Residues 35 to 56 (FGEKPLGKLDDSNRDTEGFDHT) form a disordered region.

This sequence belongs to the ZipA family. In terms of assembly, interacts with FtsZ via their C-terminal domains.

The protein resides in the cell inner membrane. Essential cell division protein that stabilizes the FtsZ protofilaments by cross-linking them and that serves as a cytoplasmic membrane anchor for the Z ring. Also required for the recruitment to the septal ring of downstream cell division proteins. This Photobacterium profundum (strain SS9) protein is Cell division protein ZipA.